Reading from the N-terminus, the 33-residue chain is Brevinin 2AV (33 aa).

A disulfide bridge connects residues cysteine 27 and cysteine 33.

As to expression, expressed by the skin glands.

Its subcellular location is the secreted. Functionally, has antibacterial activity. This Rana arvalis (Moor frog) protein is Brevinin 2AV.